The primary structure comprises 843 residues: Speckle targeted PIP5K1A-regulated poly(A) polymerase (843 aa).

A Matrin-type zinc finger spans residues F25–E55. The RRM domain maps to E54–S126. The segment covering P134–G146 has biased composition (basic residues). Residues P134 to E157 form a disordered region. S215 is an ATP binding site. Mg(2+) contacts are provided by D226 and D228. D226 and D228 together coordinate UTP. Residues V241 to S255 show a composition bias toward basic and acidic residues. A disordered region spans residues V241 to L292. ATP is bound at residue N354. 4 residues coordinate UTP: N354, R376, Y398, and H516. In terms of domain architecture, PAP-associated spans S456–H516. The tract at residues P564–Q837 is KA1; binds the bulging loops of U6 snRNA but is dispensable for terminal uridylyltransferase activity. The tract at residues Q653 to T691 is disordered. Over residues E658–E670 the composition is skewed to basic and acidic residues.

It belongs to the DNA polymerase type-B-like family. In terms of assembly, associates with the cleavage and polyadenylation specificity factor (CPSF) complex. The cofactor is Mg(2+). Mn(2+) serves as cofactor.

The protein localises to the nucleus. Its subcellular location is the nucleolus. It is found in the nucleus speckle. It catalyses the reaction RNA(n) + UTP = RNA(n)-3'-uridine ribonucleotide + diphosphate. The enzyme catalyses RNA(n) + ATP = RNA(n)-3'-adenine ribonucleotide + diphosphate. In terms of biological role, poly(A) polymerase that creates the 3'-poly(A) tail of specific pre-mRNAs. In addition to polyadenylation, it is also required for the 3'-end cleavage of pre-mRNAs: binds to the 3'UTR of targeted pre-mRNAs and promotes the recruitment and assembly of the CPSF complex on the 3'UTR of pre-mRNAs. In addition to adenylyltransferase activity, also has uridylyltransferase activity. However, the ATP ratio is higher than UTP in cells, suggesting that it functions primarily as a poly(A) polymerase. The protein is Speckle targeted PIP5K1A-regulated poly(A) polymerase (tut1) of Xenopus tropicalis (Western clawed frog).